The following is a 565-amino-acid chain: Phosphomethylpyrimidine synthase (565 aa).

Substrate-binding positions include Asn201, Met230, Tyr259, His295, 315 to 317 (SRG), 356 to 359 (DGLR), and Glu395. A Zn(2+)-binding site is contributed by His399. Tyr422 contacts substrate. A Zn(2+)-binding site is contributed by His463. [4Fe-4S] cluster contacts are provided by Cys543, Cys546, and Cys551.

Belongs to the ThiC family. In terms of assembly, homodimer. Requires [4Fe-4S] cluster as cofactor.

It carries out the reaction 5-amino-1-(5-phospho-beta-D-ribosyl)imidazole + S-adenosyl-L-methionine = 4-amino-2-methyl-5-(phosphooxymethyl)pyrimidine + CO + 5'-deoxyadenosine + formate + L-methionine + 3 H(+). Its pathway is cofactor biosynthesis; thiamine diphosphate biosynthesis. Catalyzes the synthesis of the hydroxymethylpyrimidine phosphate (HMP-P) moiety of thiamine from aminoimidazole ribotide (AIR) in a radical S-adenosyl-L-methionine (SAM)-dependent reaction. In Ehrlichia canis (strain Jake), this protein is Phosphomethylpyrimidine synthase.